The following is a 389-amino-acid chain: 8-amino-7-oxononanoate synthase (389 aa).

Arginine 31 serves as a coordination point for substrate. Residue 109-110 (GY) coordinates pyridoxal 5'-phosphate. Histidine 134 serves as a coordination point for substrate. Pyridoxal 5'-phosphate contacts are provided by residues serine 180, 205 to 208 (DEAH), and 236 to 239 (TLSK). The residue at position 239 (lysine 239) is an N6-(pyridoxal phosphate)lysine. Residue threonine 349 participates in substrate binding.

The protein belongs to the class-II pyridoxal-phosphate-dependent aminotransferase family. BioF subfamily. Homodimer. Requires pyridoxal 5'-phosphate as cofactor.

It catalyses the reaction 6-carboxyhexanoyl-[ACP] + L-alanine + H(+) = (8S)-8-amino-7-oxononanoate + holo-[ACP] + CO2. It participates in cofactor biosynthesis; biotin biosynthesis. Its function is as follows. Catalyzes the decarboxylative condensation of pimeloyl-[acyl-carrier protein] and L-alanine to produce 8-amino-7-oxononanoate (AON), [acyl-carrier protein], and carbon dioxide. The chain is 8-amino-7-oxononanoate synthase from Mycobacterium marinum (strain ATCC BAA-535 / M).